Consider the following 904-residue polypeptide: Exo-beta-D-glucosaminidase (904 aa).

The N-terminal stretch at 1–32 (MFHRPASVRRFVTTAVALGLLSTLSTGARAGA) is a signal peptide. The segment at 28–49 (ARAGARTHEPPPRPTTVSSTAG) is disordered. The Proton donor role is filled by aspartate 476. The Nucleophile role is filled by glutamate 545. The span at 813–828 (STTAGTDGASTTTVTV) shows a compositional bias: low complexity. The tract at residues 813–833 (STTAGTDGASTTTVTVRNTGS) is disordered.

This sequence belongs to the glycosyl hydrolase 2 family. As to quaternary structure, monomer.

The protein resides in the secreted. The enzyme catalyses Hydrolysis of chitosan or chitosan oligosaccharides to remove successive D-glucosamine residues from the non-reducing termini.. Functionally, hydrolyzes chitosan and chitooligosaccharides with retention of anomeric configuration. Has no beta-mannosidase activity. The polypeptide is Exo-beta-D-glucosaminidase (Streptomyces avermitilis (strain ATCC 31267 / DSM 46492 / JCM 5070 / NBRC 14893 / NCIMB 12804 / NRRL 8165 / MA-4680)).